Reading from the N-terminus, the 352-residue chain is Geranylgeranyl transferase type-1 subunit beta (352 aa).

4 PFTB repeats span residues Val-135 to Asp-180, Lys-187 to Gly-228, Phe-236 to Asp-276, and Phe-283 to Asn-325. Geranylgeranyl diphosphate is bound by residues His-213–Gly-215 and Arg-255–Lys-258. Zn(2+)-binding residues include Asp-261 and Cys-263. Tyr-264 to Trp-267 serves as a coordination point for geranylgeranyl diphosphate. His-313 is a Zn(2+) binding site.

This sequence belongs to the protein prenyltransferase subunit beta family. In terms of assembly, heterodimer of an alpha and a beta subunit. It depends on Zn(2+) as a cofactor. The cofactor is Mg(2+).

The enzyme catalyses geranylgeranyl diphosphate + L-cysteinyl-[protein] = S-geranylgeranyl-L-cysteinyl-[protein] + diphosphate. In terms of biological role, catalyzes the transfer of a geranyl-geranyl moiety from geranyl-geranyl pyrophosphate to a cysteine at the fourth position from the C-terminus of proteins having the C-terminal sequence Cys-aliphatic-aliphatic-X. This is Geranylgeranyl transferase type-1 subunit beta (pggt1b) from Dictyostelium discoideum (Social amoeba).